Consider the following 262-residue polypeptide: Type III pantothenate kinase (262 aa).

Residue 6–13 (DAGNTNMV) coordinates ATP. Residues Y100 and 107-110 (GADR) contribute to the substrate site. Residue D109 is the Proton acceptor of the active site. A K(+)-binding site is contributed by D129. T132 provides a ligand contact to ATP. T184 provides a ligand contact to substrate.

This sequence belongs to the type III pantothenate kinase family. As to quaternary structure, homodimer. NH4(+) serves as cofactor. The cofactor is K(+).

It localises to the cytoplasm. The enzyme catalyses (R)-pantothenate + ATP = (R)-4'-phosphopantothenate + ADP + H(+). It functions in the pathway cofactor biosynthesis; coenzyme A biosynthesis; CoA from (R)-pantothenate: step 1/5. Functionally, catalyzes the phosphorylation of pantothenate (Pan), the first step in CoA biosynthesis. This chain is Type III pantothenate kinase, found in Clostridium tetani (strain Massachusetts / E88).